The chain runs to 347 residues: Vitellogenin-3 (347 aa).

The signal sequence occupies residues Met1–Ala15. Asn80 is a glycosylation site (N-linked (GlcNAc...) asparagine). Residues Pro104 to Ser118 are compositionally biased toward low complexity. Disordered stretches follow at residues Pro104 to Cys174 and Gln200 to Gly234. Basic and acidic residues predominate over residues Pro124–Ile133. A compositionally biased stretch (low complexity) spans Ser144–Ser163. Basic and acidic residues predominate over residues Ser164–Cys174. N-linked (GlcNAc...) asparagine glycosylation occurs at Asn208. The segment covering Ser209–Ser219 has biased composition (low complexity).

In terms of processing, phosvitin, an egg yolk storage protein, is one of the most highly phosphorylated (10%) proteins in nature. Cathepsin D is responsible for intraoocytic processing of vitellogenin. Post-translationally, may contain intrachain disulfide bonds. In terms of tissue distribution, produced by the liver, secreted into the blood and then sequestered by receptor mediated endocytosis into growing oocytes, where it is generally cleaved, giving rise to the respective yolk components.

Precursor of the egg-yolk proteins that are sources of nutrients during early development of oviparous organisms. In terms of biological role, phosvitin is believed to be of importance in sequestering calcium, iron and other cations for the developing embryo. The sequence is that of Vitellogenin-3 (VTG3) from Gallus gallus (Chicken).